The following is a 111-amino-acid chain: Ribosome-binding factor A (111 aa).

This sequence belongs to the RbfA family. As to quaternary structure, monomer. Binds 30S ribosomal subunits, but not 50S ribosomal subunits or 70S ribosomes.

Its subcellular location is the cytoplasm. Functionally, one of several proteins that assist in the late maturation steps of the functional core of the 30S ribosomal subunit. Associates with free 30S ribosomal subunits (but not with 30S subunits that are part of 70S ribosomes or polysomes). Required for efficient processing of 16S rRNA. May interact with the 5'-terminal helix region of 16S rRNA. This is Ribosome-binding factor A from Helicobacter pylori (strain P12).